We begin with the raw amino-acid sequence, 146 residues long: Hemoglobin subunit beta (146 aa).

An N-acetylvaline modification is found at Val1. In terms of domain architecture, Globin spans 2–146; the sequence is HLSADEKNAL…VANALAHKYH (145 aa). Ser44 carries the post-translational modification Phosphoserine. N6-acetyllysine is present on Lys59. His63 is a binding site for heme b. The residue at position 82 (Lys82) is an N6-acetyllysine. His92 serves as a coordination point for heme b. At Cys93 the chain carries S-nitrosocysteine. Position 144 is an N6-acetyllysine (Lys144).

The protein belongs to the globin family. In terms of assembly, heterotetramer of two alpha chains and two beta chains. In terms of tissue distribution, red blood cells.

Involved in oxygen transport from the lung to the various peripheral tissues. This Sciurus carolinensis (Eastern gray squirrel) protein is Hemoglobin subunit beta.